The following is a 229-amino-acid chain: Flagellar L-ring protein (229 aa).

Positions 1 to 25 are cleaved as a signal peptide; it reads MKQVRLLPSAAVRAACALAAAALAG. Residue C26 is the site of N-palmitoyl cysteine attachment. C26 carries the S-diacylglycerol cysteine lipid modification.

The protein belongs to the FlgH family. In terms of assembly, the basal body constitutes a major portion of the flagellar organelle and consists of four rings (L,P,S, and M) mounted on a central rod.

It is found in the cell outer membrane. The protein resides in the bacterial flagellum basal body. In terms of biological role, assembles around the rod to form the L-ring and probably protects the motor/basal body from shearing forces during rotation. This chain is Flagellar L-ring protein, found in Burkholderia multivorans (strain ATCC 17616 / 249).